A 153-amino-acid polypeptide reads, in one-letter code: Small ribosomal subunit protein uS13 (153 aa).

It belongs to the universal ribosomal protein uS13 family. In terms of assembly, part of the 30S ribosomal subunit. Forms a loose heterodimer with protein S19. Forms two bridges to the 50S subunit in the 70S ribosome.

Located at the top of the head of the 30S subunit, it contacts several helices of the 16S rRNA. In the 70S ribosome it contacts the 23S rRNA (bridge B1a) and protein L5 of the 50S subunit (bridge B1b), connecting the 2 subunits; these bridges are implicated in subunit movement. The sequence is that of Small ribosomal subunit protein uS13 from Pyrobaculum calidifontis (strain DSM 21063 / JCM 11548 / VA1).